The primary structure comprises 193 residues: Potassium-transporting ATPase KdpC subunit (193 aa).

Residues 7–27 traverse the membrane as a helical segment; sequence PLVVLFVILTAVTGLAYPAVM.

Belongs to the KdpC family. The system is composed of three essential subunits: KdpA, KdpB and KdpC.

Its subcellular location is the cell inner membrane. Functionally, part of the high-affinity ATP-driven potassium transport (or Kdp) system, which catalyzes the hydrolysis of ATP coupled with the electrogenic transport of potassium into the cytoplasm. This subunit acts as a catalytic chaperone that increases the ATP-binding affinity of the ATP-hydrolyzing subunit KdpB by the formation of a transient KdpB/KdpC/ATP ternary complex. This chain is Potassium-transporting ATPase KdpC subunit, found in Burkholderia cenocepacia (strain ATCC BAA-245 / DSM 16553 / LMG 16656 / NCTC 13227 / J2315 / CF5610) (Burkholderia cepacia (strain J2315)).